The primary structure comprises 426 residues: MGQFRFLALIVAVLCFSVALFLPTADEPDQDSYSVPLNQSVNTSQPPSSEMVPSDIRLTPLPQPKRIHYMVKVGDTLSGIFAQLGVPYSILQKILSVDLDHLQLDMIQPGEELELMMDDMGQLSRLIYHMSIVEKAIYTRENDGSFSYDFQEISGEWREILFSGEINGSFSVSARRVGLTSSQVANITQVMKDKIDFSRSLRAGDRFDILVKQQYLGEHNTGNSEIKAISFKLAKGDVSAFLAEDGRFYDRAGNSLERAFNRYPVDKAYRQITSGFNPKRKHPVTGRVVPHNGTDFATPIGAPVYSTGDGKVIVVRKHPYAGNYLVIEHNSVYKTRYLHLDKILVKKGQLVKRGQKIALAGATGRLTGPHLHFEVLVRNRPVDAMKADLPIAKSLSSNQKTSFLARVSEFDHLVQANQQEVALDET.

The N-terminal stretch at 1-21 (MGQFRFLALIVAVLCFSVALF) is a signal peptide. Residues 32–48 (SYSVPLNQSVNTSQPPS) show a composition bias toward polar residues. Residues 32 to 55 (SYSVPLNQSVNTSQPPSSEMVPSD) form a disordered region. 3 residues coordinate Zn(2+): H291, D295, and H372.

The protein belongs to the peptidase M23B family. As to quaternary structure, monomer. It depends on Zn(2+) as a cofactor.

It is found in the periplasm. The protein operates within cell wall degradation; peptidoglycan degradation. With respect to regulation, not inhibited by metal chelator EDTA. In terms of biological role, cell wall peptidoglycan (PG) DD-endopeptidase, which may act as a substitute for other zinc-dependent PG endopeptidases (ShyA and ShyC) during zinc starvation. Hydrolyzes peptide cross-links which covalently connect adjacent PG strands probably to allow insertion of new glycans and thus cell wall expansion. Degrades purified whole PG sacculi in vitro. It is unclear how it is able to function in low zinc environments, but that may possibly be due to binding zinc with very high affinity, utilizing an alternative metal cofactor or that it may function independently of a bound metal cofactor. The sequence is that of Peptidoglycan DD-endopeptidase ShyB from Vibrio cholerae serotype O1 (strain ATCC 39315 / El Tor Inaba N16961).